The chain runs to 500 residues: Cytochrome P450 71B36 (500 aa).

A helical transmembrane segment spans residues 1 to 21 (MATILFLSLLFLSCILLAAFT). C440 serves as a coordination point for heme.

The protein belongs to the cytochrome P450 family. Requires heme as cofactor.

The protein localises to the membrane. In Arabidopsis thaliana (Mouse-ear cress), this protein is Cytochrome P450 71B36 (CYP71B36).